The following is a 564-amino-acid chain: Septin-9 (564 aa).

An N-acetylmethionine modification is found at Met1. Ser12 bears the Phosphoserine mark. A phosphothreonine mark is found at Thr24 and Thr31. Disordered regions lie at residues 38–165 and 178–224; these read VASS…PVTD and PAEA…DSEV. Lys44 carries the post-translational modification N6-acetyllysine. Ser64, Ser67, and Ser71 each carry phosphoserine. Over residues 95–109 the composition is skewed to polar residues; that stretch reads DISSKQVESTASTPG. Residues 116–134 are compositionally biased toward basic and acidic residues; sequence KRAEVLGHKTPEPVPRRTE. Thr125 is modified (phosphothreonine). Residues 190-203 show a composition bias toward polar residues; that stretch reads TLENSEAPMSQLQS. Tyr258 carries the post-translational modification Phosphotyrosine. One can recognise a Septin-type G domain in the interval 275–546; the sequence is QGFEFNIMVV…EAYRVKRLNE (272 aa). The G1 motif stretch occupies residues 285–292; that stretch reads GQSGLGKS. 285-292 serves as a coordination point for GTP; sequence GQSGLGKS. 2 positions are modified to phosphoserine: Ser307 and Ser312. GTP contacts are provided by residues Thr319, Gly345, 425 to 433, Gly480, and Arg495; that span reads KADTLTLEE. A G3 motif region spans residues 342-345; sequence DTPG. The segment at 424–427 is G4 motif; the sequence is AKAD.

It belongs to the TRAFAC class TrmE-Era-EngA-EngB-Septin-like GTPase superfamily. Septin GTPase family. Septins polymerize into heterooligomeric protein complexes that form filaments, and associate with cellular membranes, actin filaments, and microtubules. GTPase activity is required for filament formation. Interacts with SEPTIN2, SEPTIN6, SEPTIN7, SEPTIN11 and SEPTIN14. Interacts with RTKN and ARHGEF18. As to expression, expressed in the brain, mainly in the perikarya and processes of astrocytes in the cerebellum, dentate gyrus and corpus callosum (at protein level). In the sciatic nerve, highly expressed in Schwann cells (at protein level). Isoforms are differentially expressed in testes, kidney, liver, heart, spleen and brain. Undetectable in skeletal muscle.

The protein localises to the cytoplasm. Its subcellular location is the cytoskeleton. Functionally, filament-forming cytoskeletal GTPase. May play a role in cytokinesis (Potential). The polypeptide is Septin-9 (Rattus norvegicus (Rat)).